Reading from the N-terminus, the 468-residue chain is UDP-N-acetylmuramoyl-L-alanine--L-glutamate ligase (468 aa).

122–128 is an ATP binding site; it reads GTKGKST.

Belongs to the MurCDEF family. MurD2 subfamily.

The protein resides in the cytoplasm. It catalyses the reaction UDP-N-acetyl-alpha-D-muramoyl-L-alanine + L-glutamate + ATP = UDP-N-acetyl-alpha-D-muramoyl-L-alanyl-L-glutamate + ADP + phosphate + H(+). It participates in cell wall biogenesis; peptidoglycan biosynthesis. Its function is as follows. Cell wall formation. Catalyzes the addition of L-glutamate to the nucleotide precursor UDP-N-acetylmuramoyl-L-alanine. Has weak activity with D-glutamate. The polypeptide is UDP-N-acetylmuramoyl-L-alanine--L-glutamate ligase (Xanthomonas oryzae pv. oryzae (strain MAFF 311018)).